A 408-amino-acid chain; its full sequence is MVKVNADYLKLKAGYLFPEISRRITEFSSKNPNANLIRLGIGDVTEPLPLACREAMKAAIEEMGTEDGFRGYGPEQGYKWLREIISENDYISRGCEISAEEIFVSDGSKCDSSNILDILGKENKIAVTDPVYPVYVDTNVMTGRTGEANSVGEYTGLSYIPINSENGFEASIPKDKFDLIYLCFPNNPTGAVATKEQLVSWVKYAKENNSLILFDAAYEAFIKDESIPHSIFEIEGARDCAIEFRSFSKNAGFTGTRCAFTVIPKSLKGKAGIETVDLWSLWNRRQSTKFNGVSYVVQRGAEAVYSKEGKIQIKKLVSFYMDNAEIIKSNLTAAGFEVFGAVNAPYAWIKTPKNMSSWDFFDFLLEKANVVGTPGSGFGAAGEGYFRLSAFNSRENVEKAMERIVKLK.

Substrate contacts are provided by Tyr-15 and Gly-42. Residues Tyr-72, 108–109 (SK), Tyr-132, Asn-187, Tyr-218, and 246–248 (SFS) contribute to the pyridoxal 5'-phosphate site. Residues Lys-109, Tyr-132, and Asn-187 each contribute to the substrate site. Position 249 is an N6-(pyridoxal phosphate)lysine (Lys-249). Residues Arg-257 and Asn-291 each contribute to the pyridoxal 5'-phosphate site. Positions 291 and 387 each coordinate substrate.

This sequence belongs to the class-I pyridoxal-phosphate-dependent aminotransferase family. LL-diaminopimelate aminotransferase subfamily. As to quaternary structure, homodimer. Pyridoxal 5'-phosphate serves as cofactor.

It catalyses the reaction (2S,6S)-2,6-diaminopimelate + 2-oxoglutarate = (S)-2,3,4,5-tetrahydrodipicolinate + L-glutamate + H2O + H(+). It participates in amino-acid biosynthesis; L-lysine biosynthesis via DAP pathway; LL-2,6-diaminopimelate from (S)-tetrahydrodipicolinate (aminotransferase route): step 1/1. Involved in the synthesis of meso-diaminopimelate (m-DAP or DL-DAP), required for both lysine and peptidoglycan biosynthesis. Catalyzes the direct conversion of tetrahydrodipicolinate to LL-diaminopimelate. The chain is LL-diaminopimelate aminotransferase from Prochlorococcus marinus (strain NATL1A).